The primary structure comprises 471 residues: Vanillate/3-O-methylgallate O-demethylase (471 aa).

Tyr-31 serves as a coordination point for substrate. Gln-57 is a binding site for (6S)-5,6,7,8-tetrahydrofolate. A substrate-binding site is contributed by His-60. Residues Gln-93 and Val-120 each contribute to the (6S)-5,6,7,8-tetrahydrofolate site. Residue Arg-122 coordinates substrate. Positions 165 and 215 each coordinate (6S)-5,6,7,8-tetrahydrofolate. Residue 247–250 (YPSN) coordinates substrate. Trp-256 contributes to the (6S)-5,6,7,8-tetrahydrofolate binding site.

Belongs to the GcvT family. In terms of assembly, homodimer.

It carries out the reaction vanillate + (6S)-5,6,7,8-tetrahydrofolate = (6S)-5-methyl-5,6,7,8-tetrahydrofolate + 3,4-dihydroxybenzoate. The catalysed reaction is 3-O-methylgallate + (6S)-5,6,7,8-tetrahydrofolate = 3,4,5-trihydroxybenzoate + (6S)-5-methyl-5,6,7,8-tetrahydrofolate. It functions in the pathway secondary metabolite metabolism; lignin degradation. Involved in the catabolism of vanillate and syringate. Catalyzes the transfer of a methyl moiety from vanillate or 3-O-methylgallate (3MGA) to tetrahydrofolate, forming protocatechuate (PCA) or gallate, respectively, and methyl-tetrahydrofolate. Has similar activities with both substrates. Cannot use syringate. Uses an ordered, sequential kinetic mechanism. The polypeptide is Vanillate/3-O-methylgallate O-demethylase (Sphingobium sp. (strain NBRC 103272 / SYK-6)).